The following is a 140-amino-acid chain: Zinc finger SWIM domain-containing protein 7 (140 aa).

The SWIM-type zinc finger occupies 66 to 114; that stretch reads YQVLGSSSKTYTCLASCHYCSCPAFAFSVLRKSDSILCKHLLAVYLSQV.

This sequence belongs to the SWS1 family. Interacts with RAD51D and XRCC3; involved in homologous recombination repair. Interacts with SWSAP1; they form a functional complex involved in homologous recombination repair and stabilize each other. As to expression, expressed in ovary and testis.

The protein localises to the nucleus. Involved in early stages of the homologous recombination repair (HRR) pathway of double-stranded DNA breaks arising during DNA replication or induced by DNA-damaging agents. Required for meiotic progression, hence for fertility. This chain is Zinc finger SWIM domain-containing protein 7 (ZSWIM7), found in Homo sapiens (Human).